We begin with the raw amino-acid sequence, 433 residues long: Glutamate-1-semialdehyde 2,1-aminomutase (433 aa).

Residue Lys-273 is modified to N6-(pyridoxal phosphate)lysine.

This sequence belongs to the class-III pyridoxal-phosphate-dependent aminotransferase family. HemL subfamily. As to quaternary structure, homodimer. Pyridoxal 5'-phosphate serves as cofactor.

It is found in the cytoplasm. The enzyme catalyses (S)-4-amino-5-oxopentanoate = 5-aminolevulinate. It functions in the pathway porphyrin-containing compound metabolism; protoporphyrin-IX biosynthesis; 5-aminolevulinate from L-glutamyl-tRNA(Glu): step 2/2. The protein operates within porphyrin-containing compound metabolism; chlorophyll biosynthesis. This chain is Glutamate-1-semialdehyde 2,1-aminomutase, found in Rippkaea orientalis (strain PCC 8801 / RF-1) (Cyanothece sp. (strain PCC 8801)).